The following is a 347-amino-acid chain: CRISPR-associated endonuclease Cas1 4 (347 aa).

Residues 1-21 (MNIENEVHIENASESKREPKP) are compositionally biased toward basic and acidic residues. The segment at 1–25 (MNIENEVHIENASESKREPKPPEGL) is disordered. Glutamate 176, histidine 241, and glutamate 256 together coordinate Mn(2+).

The protein belongs to the CRISPR-associated endonuclease Cas1 family. In terms of assembly, homodimer, forms a heterotetramer with a Cas2 homodimer. Requires Mg(2+) as cofactor. The cofactor is Mn(2+).

Its function is as follows. CRISPR (clustered regularly interspaced short palindromic repeat), is an adaptive immune system that provides protection against mobile genetic elements (viruses, transposable elements and conjugative plasmids). CRISPR clusters contain spacers, sequences complementary to antecedent mobile elements, and target invading nucleic acids. CRISPR clusters are transcribed and processed into CRISPR RNA (crRNA). Acts as a dsDNA endonuclease. Involved in the integration of spacer DNA into the CRISPR cassette. The chain is CRISPR-associated endonuclease Cas1 4 from Methanospirillum hungatei JF-1 (strain ATCC 27890 / DSM 864 / NBRC 100397 / JF-1).